We begin with the raw amino-acid sequence, 521 residues long: Bifunctional purine biosynthesis protein PurH (521 aa).

Residues 1 to 145 (MIKQALISVS…KNHRDVTVVV (145 aa)) form the MGS-like domain.

The protein belongs to the PurH family.

It catalyses the reaction (6R)-10-formyltetrahydrofolate + 5-amino-1-(5-phospho-beta-D-ribosyl)imidazole-4-carboxamide = 5-formamido-1-(5-phospho-D-ribosyl)imidazole-4-carboxamide + (6S)-5,6,7,8-tetrahydrofolate. The enzyme catalyses IMP + H2O = 5-formamido-1-(5-phospho-D-ribosyl)imidazole-4-carboxamide. It functions in the pathway purine metabolism; IMP biosynthesis via de novo pathway; 5-formamido-1-(5-phospho-D-ribosyl)imidazole-4-carboxamide from 5-amino-1-(5-phospho-D-ribosyl)imidazole-4-carboxamide (10-formyl THF route): step 1/1. It participates in purine metabolism; IMP biosynthesis via de novo pathway; IMP from 5-formamido-1-(5-phospho-D-ribosyl)imidazole-4-carboxamide: step 1/1. The protein is Bifunctional purine biosynthesis protein PurH of Burkholderia cenocepacia (strain HI2424).